A 638-amino-acid chain; its full sequence is Probable ATP-binding protein YheS (638 aa).

2 consecutive ABC transporter domains span residues 2–246 (IIFS…AQQT) and 313–531 (VMIE…STSE). Residues 34-41 (GKNGCGKS) and 349-356 (GKNGAGKS) each bind ATP. The disordered stretch occupies residues 525 to 563 (EQNSTSENKVSEKVGDNENSVQNRKEQKRREAELRQQTA). Basic and acidic residues predominate over residues 547-558 (NRKEQKRREAEL).

This sequence belongs to the ABC transporter superfamily. ABCF family. YheS subfamily.

Its function is as follows. Genetic data indicate it may be involved in ribosome assembly or function. In Haemophilus influenzae (strain ATCC 51907 / DSM 11121 / KW20 / Rd), this protein is Probable ATP-binding protein YheS.